Here is a 191-residue protein sequence, read N- to C-terminus: D-glycero-beta-D-manno-heptose-1,7-bisphosphate 7-phosphatase (191 aa).

Asp11 (nucleophile) is an active-site residue. Mg(2+) contacts are provided by Asp11 and Asp13. Substrate contacts are provided by residues 11 to 13 (DRD), 19 to 22 (DHGY), and 53 to 56 (TNQS). The Proton donor role is filled by Asp13. Residues Cys92, His94, Cys107, and Cys109 each contribute to the Zn(2+) site. Substrate is bound at residue 110–111 (RK). Residues Asp136 and Lys137 each contribute to the Mg(2+) site. Substrate is bound at residue Lys137.

It belongs to the GmhB family. In terms of assembly, monomer. Requires Mg(2+) as cofactor. Zn(2+) serves as cofactor.

Its subcellular location is the cytoplasm. The catalysed reaction is D-glycero-beta-D-manno-heptose 1,7-bisphosphate + H2O = D-glycero-beta-D-manno-heptose 1-phosphate + phosphate. The protein operates within nucleotide-sugar biosynthesis; ADP-L-glycero-beta-D-manno-heptose biosynthesis; ADP-L-glycero-beta-D-manno-heptose from D-glycero-beta-D-manno-heptose 7-phosphate: step 2/4. It participates in bacterial outer membrane biogenesis; LPS core biosynthesis. In terms of biological role, converts the D-glycero-beta-D-manno-heptose 1,7-bisphosphate intermediate into D-glycero-beta-D-manno-heptose 1-phosphate by removing the phosphate group at the C-7 position. The sequence is that of D-glycero-beta-D-manno-heptose-1,7-bisphosphate 7-phosphatase (gmhB) from Escherichia coli O157:H7.